Reading from the N-terminus, the 217-residue chain is Protein matrimony (217 aa).

A POLO box domain (PBD)-binding motif is present at residues 39 to 41; it reads STP. 2 positions are modified to phosphoserine: Ser-63 and Ser-66. Residues 83 to 106 are disordered; the sequence is KQQQQQQHQHCHRTQLKPPPFVLP. The 61-residue stretch at 157–217 folds into the SAM domain; it reads NHAANVEQIL…NRIMDVLHTL (61 aa).

In terms of assembly, interacts with polo. Interacts with cort. Post-translationally, probably ubiquitinated: degraded during the oocyte-to-embryo transition by the anaphase promoting complex/cyclosome (APC/C) containing cort protein.

The protein resides in the nucleus. Its subcellular location is the chromosome. In terms of biological role, polo kinase inhibitor required to maintain G2 arrest in the meiotic cell cycle in females. Holds heterochromatically paired homologs together from the end of pachytene until metaphase I. Haploinsufficient locus for homologous achiasmate segregation and may be required for the maintenance of heterochromatic pairings. In Drosophila melanogaster (Fruit fly), this protein is Protein matrimony.